The chain runs to 367 residues: MESAASHIIVRTPVIDSIGELYETRGLGKKSVVLFDENTRKLYGDKIIASMQRQGFRTVELVVPARETSKSVSTAWKLYGQMIETDVDRSWNLLCVGGGVVGDLGGYIAASYYRGIPVVQLPTTLLAMTDSSIGGKVAINHPLGKNLIGYFHMPALVLIDPAFLRTLPAREIFGGMAEVVKYGFIADRKFFDMLAEHWDEVTRLEEPWISDAVSRSAFTKADVVEKDFRETSGLRATLNFGHTFAHGLEKMAEYRNLRHGEAVTIGMACALYLSYRLGFLAEAELNEGLALIARFRFPRNLVNKRFISLDLEELFDAMHSDKKKIDKQLRFVLLDRIGHAFLHDREVPKADVLHAIDDAQRWFSEKR.

Residues 99-103, 123-124, K136, K145, and 163-166 each bind NAD(+); these read GVVGD, TT, and FLRT. The Zn(2+) site is built by E178, H242, and H259.

It belongs to the sugar phosphate cyclases superfamily. Dehydroquinate synthase family. It depends on Co(2+) as a cofactor. Zn(2+) serves as cofactor. The cofactor is NAD(+).

It is found in the cytoplasm. It catalyses the reaction 7-phospho-2-dehydro-3-deoxy-D-arabino-heptonate = 3-dehydroquinate + phosphate. It functions in the pathway metabolic intermediate biosynthesis; chorismate biosynthesis; chorismate from D-erythrose 4-phosphate and phosphoenolpyruvate: step 2/7. Functionally, catalyzes the conversion of 3-deoxy-D-arabino-heptulosonate 7-phosphate (DAHP) to dehydroquinate (DHQ). The sequence is that of 3-dehydroquinate synthase from Chlorobaculum parvum (strain DSM 263 / NCIMB 8327) (Chlorobium vibrioforme subsp. thiosulfatophilum).